The primary structure comprises 156 residues: Large ribosomal subunit protein uL15 (156 aa).

A disordered region spans residues 14 to 35; sequence GSRTHGWGRVGQHRKSGSSGGK.

This sequence belongs to the universal ribosomal protein uL15 family. In terms of assembly, part of the 50S ribosomal subunit.

In terms of biological role, binds to the 23S rRNA. This Pyrobaculum islandicum (strain DSM 4184 / JCM 9189 / GEO3) protein is Large ribosomal subunit protein uL15.